The chain runs to 878 residues: Phosphoenolpyruvate carboxylase (878 aa).

Residues His-138 and Lys-545 contribute to the active site.

It belongs to the PEPCase type 1 family. The cofactor is Mg(2+).

It carries out the reaction oxaloacetate + phosphate = phosphoenolpyruvate + hydrogencarbonate. Its function is as follows. Forms oxaloacetate, a four-carbon dicarboxylic acid source for the tricarboxylic acid cycle. This is Phosphoenolpyruvate carboxylase from Shewanella sediminis (strain HAW-EB3).